The sequence spans 423 residues: Ferrochelatase, mitochondrial (423 aa).

Residues 1 to 40 constitute a mitochondrion transit peptide; that stretch reads MIRFCPSCFALKRTAPVLNHTSRLGNYFNNTFSKFSVNRM. C200 lines the [2Fe-2S] cluster pocket. Residue D385 is part of the active site. [2Fe-2S] cluster contacts are provided by C405, C408, and C413.

Belongs to the ferrochelatase family. Monomer. The cofactor is [2Fe-2S] cluster.

The protein resides in the mitochondrion inner membrane. Its subcellular location is the cytoplasm. It localises to the nucleus. It catalyses the reaction heme b + 2 H(+) = protoporphyrin IX + Fe(2+). It functions in the pathway porphyrin-containing compound metabolism; protoheme biosynthesis; protoheme from protoporphyrin-IX: step 1/1. Its function is as follows. Catalyzes the ferrous insertion into protoporphyrin IX. This chain is Ferrochelatase, mitochondrial (hem15), found in Schizosaccharomyces pombe (strain 972 / ATCC 24843) (Fission yeast).